Consider the following 352-residue polypeptide: Serine protease 55 (352 aa).

A signal peptide spans 1–18; the sequence is MLLFSVLLLLSLVTGTQL. Residues 68–300 form the Peptidase S1 domain; that stretch reads ITGGMEAEVG…YNLWIEKVTQ (233 aa). The cysteines at positions 93 and 109 are disulfide-linked. Residues H108 and D156 each act as charge relay system in the active site. 3 cysteine pairs are disulfide-bonded: C189–C256, C222–C235, and C246–C276. Residue N240 is glycosylated (N-linked (GlcNAc...) asparagine). The Charge relay system role is filled by S250. The disordered stretch occupies residues 308 to 330; that stretch reads AEKRRTSVKQKPMGSPVSGVPEP. Residues 319–330 show a composition bias toward low complexity; sequence PMGSPVSGVPEP. Residue S325 is the site of GPI-anchor amidated serine attachment. Residues 326-352 constitute a propeptide, removed in mature form; the sequence is GVPEPGSPRSWLLLCPLSHVLFRAILY.

Belongs to the peptidase S1 family. As to expression, only detected in testis. Expressed in spermatogonia, spermatocytes, spermatids, Leydig and Sertoli cells. Expressed in prostate cancer and ovarian cancer (at protein level).

It localises to the cell membrane. The protein resides in the cytoplasm. It is found in the cytosol. Probable serine protease, which plays a crucial role in the fertility of male mice including sperm migration and sperm-egg interaction. This is Serine protease 55 (PRSS55) from Homo sapiens (Human).